Here is a 335-residue protein sequence, read N- to C-terminus: 3-ketodihydrosphingosine reductase TSC10 (335 aa).

G42, S44, S45, G46, R67, D68, K71, D95, and L96 together coordinate NADPH. The GXSXG motif lies at G42–G46. Positions L141 to E207 are involved in homodimer formation. The active-site Proton acceptor is the Y190. Positions 190, 194, and 223 each coordinate NADP(+). K194 serves as the catalytic Lowers pKa of active site Tyr. Residues T288–W308 form a helical membrane-spanning segment.

Belongs to the short-chain dehydrogenases/reductases (SDR) family. Homodimer; a minor portion forms homotetramers.

The protein resides in the endoplasmic reticulum membrane. It carries out the reaction sphinganine + NADP(+) = 3-oxosphinganine + NADPH + H(+). Its pathway is lipid metabolism; sphingolipid metabolism. Catalyzes the reduction of 3'-oxosphinganine (3-ketodihydrosphingosine/KDS) to sphinganine (dihydrosphingosine/DHS), the second step of de novo sphingolipid biosynthesis. This is 3-ketodihydrosphingosine reductase TSC10 (TSC10) from Cryptococcus neoformans var. neoformans serotype D (strain JEC21 / ATCC MYA-565) (Filobasidiella neoformans).